Here is a 262-residue protein sequence, read N- to C-terminus: Sugar fermentation stimulation protein homolog (262 aa).

This sequence belongs to the SfsA family.

This Lawsonia intracellularis (strain PHE/MN1-00) protein is Sugar fermentation stimulation protein homolog.